The primary structure comprises 149 residues: Arginine repressor (149 aa).

The protein belongs to the ArgR family.

It localises to the cytoplasm. The protein operates within amino-acid biosynthesis; L-arginine biosynthesis [regulation]. In terms of biological role, regulates arginine biosynthesis genes. The polypeptide is Arginine repressor (Chlorobaculum tepidum (strain ATCC 49652 / DSM 12025 / NBRC 103806 / TLS) (Chlorobium tepidum)).